The sequence spans 102 residues: UPF0235 protein Noc_3000 (102 aa).

The protein belongs to the UPF0235 family.

The sequence is that of UPF0235 protein Noc_3000 from Nitrosococcus oceani (strain ATCC 19707 / BCRC 17464 / JCM 30415 / NCIMB 11848 / C-107).